A 245-amino-acid chain; its full sequence is tRNA1(Val) (adenine(37)-N6)-methyltransferase (245 aa).

This sequence belongs to the methyltransferase superfamily. tRNA (adenine-N(6)-)-methyltransferase family.

The protein localises to the cytoplasm. The catalysed reaction is adenosine(37) in tRNA1(Val) + S-adenosyl-L-methionine = N(6)-methyladenosine(37) in tRNA1(Val) + S-adenosyl-L-homocysteine + H(+). Functionally, specifically methylates the adenine in position 37 of tRNA(1)(Val) (anticodon cmo5UAC). This is tRNA1(Val) (adenine(37)-N6)-methyltransferase from Salmonella typhi.